The sequence spans 100 residues: Small ribosomal subunit protein uS14c (100 aa).

This sequence belongs to the universal ribosomal protein uS14 family. Part of the 30S ribosomal subunit.

The protein localises to the plastid. The protein resides in the chloroplast. In terms of biological role, binds 16S rRNA, required for the assembly of 30S particles. This is Small ribosomal subunit protein uS14c from Mesostigma viride (Green alga).